The sequence spans 310 residues: DnaJ-like protein MG002 (310 aa).

The region spanning 1–66 (MNLYDLLELP…KEKYDSMLKV (66 aa)) is the J domain.

In Mycoplasma genitalium (strain ATCC 33530 / DSM 19775 / NCTC 10195 / G37) (Mycoplasmoides genitalium), this protein is DnaJ-like protein MG002.